The chain runs to 94 residues: Sucrose operon repressor (94 aa).

The 56-residue stretch at 1–56 (MASLHDVARLAGVSKSTVSRVINDEYGVKEATKQKVRQAVAECGYVPNQVAKDLKE) folds into the HTH lacI-type domain. Residues 4–23 (LHDVARLAGVSKSTVSRVIN) constitute a DNA-binding region (H-T-H motif).

Functionally, repressor for the scr operon. Binds D-fructose as an inducer. This is Sucrose operon repressor (scrR) from Vibrio alginolyticus.